Reading from the N-terminus, the 178-residue chain is N-alpha-acetyltransferase 20 (178 aa).

Residues 2–157 (TTLRAFTCDD…DAYDMRKALS (156 aa)) form the N-acetyltransferase domain.

This sequence belongs to the acetyltransferase family. ARD1 subfamily. As to quaternary structure, component of the N-terminal acetyltransferase B (NatB) complex which is composed of naa20 and naa25.

The protein localises to the cytoplasm. The protein resides in the nucleus. It catalyses the reaction N-terminal L-methionyl-L-asparaginyl-[protein] + acetyl-CoA = N-terminal N(alpha)-acetyl-L-methionyl-L-asparaginyl-[protein] + CoA + H(+). The enzyme catalyses N-terminal L-methionyl-L-glutaminyl-[protein] + acetyl-CoA = N-terminal N(alpha)-acetyl-L-methionyl-L-glutaminyl-[protein] + CoA + H(+). The catalysed reaction is N-terminal L-methionyl-L-aspartyl-[protein] + acetyl-CoA = N-terminal N(alpha)-acetyl-L-methionyl-L-aspartyl-[protein] + CoA + H(+). It carries out the reaction N-terminal L-methionyl-L-glutamyl-[protein] + acetyl-CoA = N-terminal N(alpha)-acetyl-L-methionyl-L-glutamyl-[protein] + CoA + H(+). Its function is as follows. Catalytic subunit of the NatB complex which catalyzes acetylation of the N-terminal methionine residues of peptides beginning with Met-Asp, Met-Glu, Met-Asn and Met-Gln. Proteins with cell cycle functions are overrepresented in the pool of NatB substrates. Required for maintaining the structure and function of actomyosin fibers and for proper cellular migration. The sequence is that of N-alpha-acetyltransferase 20 (naa20) from Danio rerio (Zebrafish).